Here is an 83-residue protein sequence, read N- to C-terminus: Toxin TdNa3 (83 aa).

Residues M1–S20 form the signal peptide. The LCN-type CS-alpha/beta domain occupies K21–G82. Cystine bridges form between C31/C81, C35/C57, C43/C62, and C47/C64. C81 bears the Cysteine amide mark.

It belongs to the long (4 C-C) scorpion toxin superfamily. Sodium channel inhibitor family. Beta subfamily. As to expression, expressed by the venom gland.

It is found in the secreted. Its function is as follows. Inhibits the sodium currents (Nav) in an apparent irreversible manner. Produces small depolarization and induces repetitive firing in squid axons. Is specific for arthropods (crickets, triatomides, crabs and squids), but is non-toxic to mice. In Tityus discrepans (Venezuelan scorpion), this protein is Toxin TdNa3.